The chain runs to 307 residues: Acetyl-coenzyme A carboxylase carboxyl transferase subunit beta (307 aa).

The CoA carboxyltransferase N-terminal domain maps to 28 to 297 (LWVKCPDTGQ…TPEPGTAPEP (270 aa)). The disordered stretch occupies residues 286–307 (RRTPEPGTAPEPTTPEPLPNAA). Positions 292 to 307 (GTAPEPTTPEPLPNAA) are enriched in pro residues.

Belongs to the AccD/PCCB family. In terms of assembly, acetyl-CoA carboxylase is a heterohexamer composed of biotin carboxyl carrier protein (AccB), biotin carboxylase (AccC) and two subunits each of ACCase subunit alpha (AccA) and ACCase subunit beta (AccD).

It is found in the cytoplasm. It catalyses the reaction N(6)-carboxybiotinyl-L-lysyl-[protein] + acetyl-CoA = N(6)-biotinyl-L-lysyl-[protein] + malonyl-CoA. Its pathway is lipid metabolism; malonyl-CoA biosynthesis; malonyl-CoA from acetyl-CoA: step 1/1. In terms of biological role, component of the acetyl coenzyme A carboxylase (ACC) complex. Biotin carboxylase (BC) catalyzes the carboxylation of biotin on its carrier protein (BCCP) and then the CO(2) group is transferred by the transcarboxylase to acetyl-CoA to form malonyl-CoA. In Methylorubrum extorquens (strain ATCC 14718 / DSM 1338 / JCM 2805 / NCIMB 9133 / AM1) (Methylobacterium extorquens), this protein is Acetyl-coenzyme A carboxylase carboxyl transferase subunit beta.